The primary structure comprises 1005 residues: Vacuolar membrane protease (1005 aa).

Residues 1 to 14 (MAKETTARSILGYQ) lie on the Cytoplasmic side of the membrane. The chain crosses the membrane as a helical span at residues 15–35 (TLPTTALIALIYVVAFFSVLV). Topologically, residues 36–353 (SDQLPSIPHP…PEDSAKQKSK (318 aa)) are vacuolar. Residue N107 is glycosylated (N-linked (GlcNAc...) asparagine). H152 and D164 together coordinate Zn(2+). Residue E196 is the Proton acceptor of the active site. E197 serves as a coordination point for Zn(2+). Residue N213 is glycosylated (N-linked (GlcNAc...) asparagine). The Zn(2+) site is built by E222 and H311. The helical transmembrane segment at 354–374 (PGVYFDRPVVLALLWAIGAVL) threads the bilayer. At 375–448 (KHNAGSPPPP…LITVWKQASF (74 aa)) the chain is on the cytoplasmic side. The segment at 379–420 (GSPPPPPKPTVPHSANNASAGTGRPGASTRQPTRSFGSNEDA) is disordered. Positions 406–419 (STRQPTRSFGSNED) are enriched in polar residues. Residues 449–469 (WIALIVTVGLQALLAWGYVAI) form a helical membrane-spanning segment. Topologically, residues 470–479 (NPFTIYSRPY) are vacuolar. Residues 480-500 (FVLLSFFALSFFSMTLVLQAA) traverse the membrane as a helical segment. The Cytoplasmic portion of the chain corresponds to 501–519 (FPSSPVKHAIEVREQEKTT). The chain crosses the membrane as a helical span at residues 520-540 (ILLHLHLLSWIALLLSTILIG). The Vacuolar portion of the chain corresponds to 541 to 543 (KSQ). A helical membrane pass occupies residues 544-564 (VGSFYVVTVWYLGIWAATVIG). Residues 565 to 644 (TLQPILVSKR…RKTNSKSKED (80 aa)) are Cytoplasmic-facing. The disordered stretch occupies residues 577–640 (DKGKRRARRS…ASNRRKTNSK (64 aa)). A compositionally biased stretch (low complexity) spans 588-606 (SASTSSSSSSSSSSSSGSD). The helical transmembrane segment at 645 to 665 (GAIGWWIAQVLLTVPPVVMLV) threads the bilayer. At 666–686 (GQITSIVLEAMNQTLTDGNSA) the chain is on the vacuolar side. Residue N677 is glycosylated (N-linked (GlcNAc...) asparagine). Residues 687-707 (WSIYLLTALLATMLVLPVAPF) form a helical membrane-spanning segment. The Cytoplasmic segment spans residues 708–713 (SPKLHR). A helical membrane pass occupies residues 714-734 (GLIFLSAAVFVGFTIYLWVVF). The Vacuolar portion of the chain corresponds to 735-1005 (PFTRQDPFKV…VEASAPFTVV (271 aa)). N761 and N961 each carry an N-linked (GlcNAc...) asparagine glycan.

Belongs to the peptidase M28 family. The cofactor is Zn(2+).

It localises to the vacuole membrane. Functionally, may be involved in vacuolar sorting and osmoregulation. The sequence is that of Vacuolar membrane protease from Coprinopsis cinerea (strain Okayama-7 / 130 / ATCC MYA-4618 / FGSC 9003) (Inky cap fungus).